Reading from the N-terminus, the 183-residue chain is Ferredoxin-2, mitochondrial (183 aa).

The N-terminal 52 residues, Met1–Pro52, are a transit peptide targeting the mitochondrion. The region spanning Val68–Thr170 is the 2Fe-2S ferredoxin-type domain. Residues Cys105, Cys111, Cys114, and Cys151 each contribute to the [2Fe-2S] cluster site.

It belongs to the adrenodoxin/putidaredoxin family. Component of the mitochondrial core iron-sulfur cluster (ISC) complex composed of NFS1, LYRM4, NDUFAB1, ISCU, FXN, and FDX2; this complex is a heterohexamer containing two copies of each monomer. Form a heterodimer complex with NFS1. Interacts (in both their reduced and oxidized states) with the cysteine desulfurase (NFS1:LYRM4) complex; this interaction stimulates cysteine desulfurase activity, and serves as a reductant for Fe-S cluster assembly. Requires [2Fe-2S] cluster as cofactor.

The protein localises to the mitochondrion. It is found in the mitochondrion matrix. Electron donor, of the core iron-sulfur cluster (ISC) assembly complex, that acts to reduce the persulfide into sulfide during [2Fe-2S] clusters assembly on the scaffolding protein ISCU. The core iron-sulfur cluster (ISC) assembly complex is involved in the de novo synthesis of a [2Fe-2S] cluster, the first step of the mitochondrial iron-sulfur protein biogenesis. This process is initiated by the cysteine desulfurase complex (NFS1:LYRM4:NDUFAB1) that produces persulfide which is delivered on the scaffold protein ISCU in a FXN-dependent manner. Then this complex is stabilized by FDX2 which provides reducing equivalents to accomplish the [2Fe-2S] cluster assembly. Finally, the [2Fe-2S] cluster is transferred from ISCU to chaperone proteins, including HSCB, HSPA9 and GLRX5. Essential for coenzyme Q biosynthesis: together with FDXR, transfers the electrons required for the hydroxylation reaction performed by COQ6. In Bos taurus (Bovine), this protein is Ferredoxin-2, mitochondrial.